Here is a 272-residue protein sequence, read N- to C-terminus: Tryptophan synthase alpha chain (272 aa).

Active-site proton acceptor residues include E49 and E60.

It belongs to the TrpA family. In terms of assembly, tetramer of two alpha and two beta chains.

It carries out the reaction (1S,2R)-1-C-(indol-3-yl)glycerol 3-phosphate + L-serine = D-glyceraldehyde 3-phosphate + L-tryptophan + H2O. It participates in amino-acid biosynthesis; L-tryptophan biosynthesis; L-tryptophan from chorismate: step 5/5. In terms of biological role, the alpha subunit is responsible for the aldol cleavage of indoleglycerol phosphate to indole and glyceraldehyde 3-phosphate. This Legionella pneumophila subsp. pneumophila (strain Philadelphia 1 / ATCC 33152 / DSM 7513) protein is Tryptophan synthase alpha chain.